Reading from the N-terminus, the 461-residue chain is Ribulose bisphosphate carboxylase (461 aa).

N112 is a substrate binding site. K167 (proton acceptor) is an active-site residue. Position 169 (K169) interacts with substrate. Residues K192, D194, and E195 each coordinate Mg(2+). K192 carries the N6-carboxylysine modification. H288 functions as the Proton acceptor in the catalytic mechanism. R289, H322, and S369 together coordinate substrate.

The protein belongs to the RuBisCO large chain family. Type II subfamily. As to quaternary structure, homodimer. Requires Mg(2+) as cofactor.

The catalysed reaction is 2 (2R)-3-phosphoglycerate + 2 H(+) = D-ribulose 1,5-bisphosphate + CO2 + H2O. The enzyme catalyses D-ribulose 1,5-bisphosphate + O2 = 2-phosphoglycolate + (2R)-3-phosphoglycerate + 2 H(+). Functionally, ruBisCO catalyzes two reactions: the carboxylation of D-ribulose 1,5-bisphosphate, the primary event in carbon dioxide fixation, as well as the oxidative fragmentation of the pentose substrate. Both reactions occur simultaneously and in competition at the same active site. This is Ribulose bisphosphate carboxylase from Rhodopseudomonas palustris (strain BisB18).